The primary structure comprises 88 residues: Small ribosomal subunit protein bS16c (88 aa).

The protein belongs to the bacterial ribosomal protein bS16 family.

It is found in the plastid. The protein localises to the chloroplast. The sequence is that of Small ribosomal subunit protein bS16c from Sinapis alba (White mustard).